We begin with the raw amino-acid sequence, 273 residues long: Large ribosomal subunit protein uL2c (273 aa).

The interval 223–273 (MNPVDHPHGGGEGRAPIGRKKPTTPWGYPALGRRSRKRNKYSDSFILRRRK) is disordered.

Belongs to the universal ribosomal protein uL2 family. Part of the 50S ribosomal subunit.

The protein resides in the plastid. Its subcellular location is the chloroplast. This Calycanthus floridus var. glaucus (Eastern sweetshrub) protein is Large ribosomal subunit protein uL2c (rpl2).